We begin with the raw amino-acid sequence, 329 residues long: MAKAPMRVAVTGAAGQIGYSLLFRIANGDLLGKDQPVILQLLEIPDEKAQKALTGVMMELEDCAFPLLAGMTAHSDPMTAFKDIDVALLVGARPRGPGMERKDLLSANAQIFTAQGKALNAVAKKTVKVLVVGNPANTNAYIAMKSAPDIPAKNFTAMLRLDHNRALSQLANKLNKPVADIEKLVVWGNHSPTMYPDYRFATIDGKSVKDSINDAAWNKDVFIPTVGKRGAAIIEARGLSSAASAANAAIDHIHDWVLGTNGKWVTMGIPSKGEYGIPAEVIYGFPVTCENGEYKMIEGLEIDEFSRERMTHTLNELLEEQAGVKHLLP.

NAD(+) is bound at residue 12-18; the sequence is GAAGQIG. Residues R95 and R101 each coordinate substrate. Residues N108, Q115, and 132–134 contribute to the NAD(+) site; that span reads VGN. Residues N134 and R165 each contribute to the substrate site. H190 serves as the catalytic Proton acceptor.

Belongs to the LDH/MDH superfamily. MDH type 2 family.

The catalysed reaction is (S)-malate + NAD(+) = oxaloacetate + NADH + H(+). Its function is as follows. Catalyzes the reversible oxidation of malate to oxaloacetate. In Polynucleobacter asymbioticus (strain DSM 18221 / CIP 109841 / QLW-P1DMWA-1) (Polynucleobacter necessarius subsp. asymbioticus), this protein is Malate dehydrogenase.